Consider the following 406-residue polypeptide: Tryptophan synthase beta chain (406 aa).

Residue K99 is modified to N6-(pyridoxal phosphate)lysine.

Belongs to the TrpB family. In terms of assembly, tetramer of two alpha and two beta chains. Requires pyridoxal 5'-phosphate as cofactor.

It catalyses the reaction (1S,2R)-1-C-(indol-3-yl)glycerol 3-phosphate + L-serine = D-glyceraldehyde 3-phosphate + L-tryptophan + H2O. It participates in amino-acid biosynthesis; L-tryptophan biosynthesis; L-tryptophan from chorismate: step 5/5. Functionally, the beta subunit is responsible for the synthesis of L-tryptophan from indole and L-serine. The chain is Tryptophan synthase beta chain from Methylobacterium sp. (strain 4-46).